Here is a 327-residue protein sequence, read N- to C-terminus: Methionyl-tRNA formyltransferase (327 aa).

S121 to P124 is a (6S)-5,6,7,8-tetrahydrofolate binding site.

Belongs to the Fmt family.

It carries out the reaction L-methionyl-tRNA(fMet) + (6R)-10-formyltetrahydrofolate = N-formyl-L-methionyl-tRNA(fMet) + (6S)-5,6,7,8-tetrahydrofolate + H(+). Its function is as follows. Attaches a formyl group to the free amino group of methionyl-tRNA(fMet). The formyl group appears to play a dual role in the initiator identity of N-formylmethionyl-tRNA by promoting its recognition by IF2 and preventing the misappropriation of this tRNA by the elongation apparatus. The polypeptide is Methionyl-tRNA formyltransferase (Burkholderia pseudomallei (strain K96243)).